The sequence spans 351 residues: Ferredoxin--NADP reductase (351 aa).

7 residues coordinate FAD: Asp44, Gln52, Tyr57, Ile97, Phe132, Asp296, and Ser337.

It belongs to the ferredoxin--NADP reductase type 2 family. In terms of assembly, homodimer. Requires FAD as cofactor.

The enzyme catalyses 2 reduced [2Fe-2S]-[ferredoxin] + NADP(+) + H(+) = 2 oxidized [2Fe-2S]-[ferredoxin] + NADPH. This Burkholderia vietnamiensis (strain G4 / LMG 22486) (Burkholderia cepacia (strain R1808)) protein is Ferredoxin--NADP reductase.